We begin with the raw amino-acid sequence, 394 residues long: Elongation factor Tu (394 aa).

In terms of domain architecture, tr-type G spans R10–K204. Residues G19–T26 are G1. G19–T26 provides a ligand contact to GTP. Residue T26 participates in Mg(2+) binding. The tract at residues G60–N64 is G2. The interval D81–G84 is G3. GTP-binding positions include D81 to H85 and N136 to D139. The G4 stretch occupies residues N136–D139. The tract at residues S174–L176 is G5.

The protein belongs to the TRAFAC class translation factor GTPase superfamily. Classic translation factor GTPase family. EF-Tu/EF-1A subfamily. In terms of assembly, monomer.

The protein localises to the cytoplasm. The catalysed reaction is GTP + H2O = GDP + phosphate + H(+). GTP hydrolase that promotes the GTP-dependent binding of aminoacyl-tRNA to the A-site of ribosomes during protein biosynthesis. This Blochmanniella floridana protein is Elongation factor Tu.